Reading from the N-terminus, the 338-residue chain is Methionyl-tRNA formyltransferase (338 aa).

110–113 (SLLP) contributes to the (6S)-5,6,7,8-tetrahydrofolate binding site.

It belongs to the Fmt family.

It carries out the reaction L-methionyl-tRNA(fMet) + (6R)-10-formyltetrahydrofolate = N-formyl-L-methionyl-tRNA(fMet) + (6S)-5,6,7,8-tetrahydrofolate + H(+). Attaches a formyl group to the free amino group of methionyl-tRNA(fMet). The formyl group appears to play a dual role in the initiator identity of N-formylmethionyl-tRNA by promoting its recognition by IF2 and preventing the misappropriation of this tRNA by the elongation apparatus. This is Methionyl-tRNA formyltransferase from Synechococcus sp. (strain CC9902).